The chain runs to 533 residues: Trigger factor (533 aa).

One can recognise a PPIase FKBP-type domain in the interval 164–249 (GDQLIIDFTG…VKQVKVETDT (86 aa)). Residues 436 to 533 (EAAIEAEAEE…APAKKPAAKK (98 aa)) are disordered. Residues 465–477 (AAAKKAPAKKAPA) show a composition bias toward basic residues. The span at 481 to 490 (AAKDGDEKPA) shows a compositional bias: basic and acidic residues. 2 stretches are compositionally biased toward basic residues: residues 494 to 506 (APAK…KAST) and 515 to 533 (PAKK…AAKK).

The protein belongs to the FKBP-type PPIase family. Tig subfamily.

It is found in the cytoplasm. It catalyses the reaction [protein]-peptidylproline (omega=180) = [protein]-peptidylproline (omega=0). Its function is as follows. Involved in protein export. Acts as a chaperone by maintaining the newly synthesized protein in an open conformation. Functions as a peptidyl-prolyl cis-trans isomerase. In Erythrobacter litoralis (strain HTCC2594), this protein is Trigger factor.